The chain runs to 566 residues: Membrane protein insertase YidC (566 aa).

The helical transmembrane segment at 6–26 threads the bilayer; it reads NLLLLALLFVSFLLYTAWVEE. The segment at 30–80 is disordered; it reads QVAPQVQTEQVDSSVPASVASSANSANLSDGVPNSPQQSSTDATSTELPAS. The segment covering 31–41 has biased composition (polar residues); it reads VAPQVQTEQVD. Over residues 42-58 the composition is skewed to low complexity; it reads SSVPASVASSANSANLS. A compositionally biased stretch (polar residues) spans 61–80; sequence VPNSPQQSSTDATSTELPAS. A run of 4 helical transmembrane segments spans residues 356–376, 433–453, 471–491, and 510–530; these read LLLF…LITF, LGGC…YWSL, LSVQ…MFFI, and FMPV…VLYW.

Belongs to the OXA1/ALB3/YidC family. Type 1 subfamily. As to quaternary structure, interacts with the Sec translocase complex via SecD. Specifically interacts with transmembrane segments of nascent integral membrane proteins during membrane integration.

The protein resides in the cell inner membrane. Required for the insertion and/or proper folding and/or complex formation of integral membrane proteins into the membrane. Involved in integration of membrane proteins that insert both dependently and independently of the Sec translocase complex, as well as at least some lipoproteins. Aids folding of multispanning membrane proteins. This chain is Membrane protein insertase YidC, found in Psychromonas ingrahamii (strain DSM 17664 / CCUG 51855 / 37).